A 647-amino-acid polypeptide reads, in one-letter code: DNA mismatch repair protein MutL (647 aa).

The tract at residues 346–378 (QTVHAPRSAAPRVSERASDEPPAWQPSPTSGEP) is disordered.

This sequence belongs to the DNA mismatch repair MutL/HexB family.

Functionally, this protein is involved in the repair of mismatches in DNA. It is required for dam-dependent methyl-directed DNA mismatch repair. May act as a 'molecular matchmaker', a protein that promotes the formation of a stable complex between two or more DNA-binding proteins in an ATP-dependent manner without itself being part of a final effector complex. The sequence is that of DNA mismatch repair protein MutL from Limosilactobacillus fermentum (strain NBRC 3956 / LMG 18251) (Lactobacillus fermentum).